The chain runs to 118 residues: HTH-type transcriptional regulator CmtR (118 aa).

An HTH arsR-type domain is found at 3–97 (TCEMRESALA…ELVQVVLAVD (95 aa)). Residues C57, C61, and C102 each contribute to the Cd(2+) site.

In terms of assembly, homodimer.

In terms of biological role, metal-responsive transcriptional repressor for the cmt operon. Binding of cadmium or lead causes the repressor to dissociate from the DNA. In Mycobacterium bovis (strain ATCC BAA-935 / AF2122/97), this protein is HTH-type transcriptional regulator CmtR (cmtR).